Here is a 333-residue protein sequence, read N- to C-terminus: MTLAYRKIAVVGAGAWGTALAQVAASAGREVVLWAREDELVQNVNTAHENSLFLPGIALHKSIRATGDLAEAAEADALLMVTPAQHMRGVLEQLAPRIAEGKPVVLCAKGVEQSTHLLLTEVLAEAAPQAAAAVLSGPSFAAEVARGLPTAVTLACEDETVAEALTHAIGITTFRPYYSSDLIGAELGGAVKNVLAIACGIVEGKKFGDSARAALTTRGFAELTRLGLAMGARTETLMGLSGLGDLILTCNSPKSRNMSLGMALGEGKTLEEVMGARNSVSEGVHSATAVVALARKHGIEMPIAEAVARIVTGAAKVDDAVAALLSRPFRSET.

NADPH contacts are provided by tryptophan 16, arginine 36, and lysine 109. Residues lysine 109, glycine 137, and serine 139 each coordinate sn-glycerol 3-phosphate. Alanine 141 provides a ligand contact to NADPH. Lysine 192, aspartate 245, serine 255, arginine 256, and asparagine 257 together coordinate sn-glycerol 3-phosphate. The active-site Proton acceptor is lysine 192. Residue arginine 256 coordinates NADPH. Positions 280 and 282 each coordinate NADPH.

The protein belongs to the NAD-dependent glycerol-3-phosphate dehydrogenase family.

It is found in the cytoplasm. The catalysed reaction is sn-glycerol 3-phosphate + NAD(+) = dihydroxyacetone phosphate + NADH + H(+). It carries out the reaction sn-glycerol 3-phosphate + NADP(+) = dihydroxyacetone phosphate + NADPH + H(+). It functions in the pathway membrane lipid metabolism; glycerophospholipid metabolism. In terms of biological role, catalyzes the reduction of the glycolytic intermediate dihydroxyacetone phosphate (DHAP) to sn-glycerol 3-phosphate (G3P), the key precursor for phospholipid synthesis. The protein is Glycerol-3-phosphate dehydrogenase [NAD(P)+] of Parvibaculum lavamentivorans (strain DS-1 / DSM 13023 / NCIMB 13966).